The sequence spans 388 residues: Succinate--CoA ligase [ADP-forming] subunit beta (388 aa).

The region spanning 9 to 244 (KQLFAEFGLP…PSQEDKREAH (236 aa)) is the ATP-grasp domain. ATP contacts are provided by residues lysine 46, 53–55 (GRG), glutamate 99, serine 102, and glutamate 107. 2 residues coordinate Mg(2+): asparagine 199 and aspartate 213. Residues asparagine 264 and 321–323 (GIV) contribute to the substrate site.

Belongs to the succinate/malate CoA ligase beta subunit family. As to quaternary structure, heterotetramer of two alpha and two beta subunits. The cofactor is Mg(2+).

It carries out the reaction succinate + ATP + CoA = succinyl-CoA + ADP + phosphate. The catalysed reaction is GTP + succinate + CoA = succinyl-CoA + GDP + phosphate. The protein operates within carbohydrate metabolism; tricarboxylic acid cycle; succinate from succinyl-CoA (ligase route): step 1/1. Its function is as follows. Succinyl-CoA synthetase functions in the citric acid cycle (TCA), coupling the hydrolysis of succinyl-CoA to the synthesis of either ATP or GTP and thus represents the only step of substrate-level phosphorylation in the TCA. The beta subunit provides nucleotide specificity of the enzyme and binds the substrate succinate, while the binding sites for coenzyme A and phosphate are found in the alpha subunit. The chain is Succinate--CoA ligase [ADP-forming] subunit beta from Vibrio vulnificus (strain CMCP6).